The primary structure comprises 571 residues: Urease subunit alpha (571 aa).

Residues 132–571 enclose the Urease domain; that stretch reads GAIDTHIHFI…LPMGQKYFLF (440 aa). Ni(2+) is bound by residues His-137, His-139, and Lys-220. Position 220 is an N6-carboxylysine (Lys-220). A substrate-binding site is contributed by His-222. Ni(2+)-binding residues include His-249 and His-275. His-323 serves as the catalytic Proton donor. Asp-363 contacts Ni(2+).

The protein belongs to the metallo-dependent hydrolases superfamily. Urease alpha subunit family. As to quaternary structure, heterotrimer of UreA (gamma), UreB (beta) and UreC (alpha) subunits. Three heterotrimers associate to form the active enzyme. Ni cation serves as cofactor. In terms of processing, carboxylation allows a single lysine to coordinate two nickel ions.

Its subcellular location is the cytoplasm. The catalysed reaction is urea + 2 H2O + H(+) = hydrogencarbonate + 2 NH4(+). Its pathway is nitrogen metabolism; urea degradation; CO(2) and NH(3) from urea (urease route): step 1/1. The polypeptide is Urease subunit alpha (Corynebacterium urealyticum (strain ATCC 43042 / DSM 7109)).